Here is a 61-residue protein sequence, read N- to C-terminus: Large ribosomal subunit protein bL28 (61 aa).

A disordered region spans residues 1 to 27 (MAKDFVTGKKTTFGNTRSHALNSSSRS). The segment covering 9–27 (KKTTFGNTRSHALNSSSRS) has biased composition (polar residues).

Belongs to the bacterial ribosomal protein bL28 family.

This chain is Large ribosomal subunit protein bL28, found in Lactobacillus delbrueckii subsp. bulgaricus (strain ATCC 11842 / DSM 20081 / BCRC 10696 / JCM 1002 / NBRC 13953 / NCIMB 11778 / NCTC 12712 / WDCM 00102 / Lb 14).